We begin with the raw amino-acid sequence, 105 residues long: Protein Rev (105 aa).

Serine 5 bears the Phosphoserine; by host CK2 mark. Residues 18-26 are homomultimerization; the sequence is IIKILYQSN. The segment covering 24–35 has biased composition (polar residues); that stretch reads QSNPYPDSSQGT. Disordered regions lie at residues 24–49 and 65–105; these read QSNPYPDSSQGTRQARRNRRRRWRAR and LGGP…ATTE. The Nuclear localization signal and RNA-binding (RRE) motif lies at 35–51; it reads TRQARRNRRRRWRARQR. The segment covering 37–49 has biased composition (basic residues); it reads QARRNRRRRWRAR. The Nuclear export signal and binding to XPO1 motif lies at 74–85; that stretch reads LPLPPLGRLTLD. Residues 95–105 show a composition bias toward polar residues; the sequence is TESQQGTATTE.

It belongs to the HIV-1 REV protein family. Homomultimer; when bound to the RRE. Multimeric assembly is essential for activity and may involve XPO1. Binds to human KPNB1, XPO1, TNPO1, RANBP5 and IPO7. Interacts with the viral Integrase. Interacts with human KHDRBS1. Interacts with human NAP1; this interaction decreases Rev multimerization and stimulates its activity. Interacts with human DEAD-box helicases DDX3 and DDX24; these interactions may serve for viral RNA export to the cytoplasm and packaging, respectively. Interacts with human PSIP1; this interaction may inhibit HIV-1 DNA integration by promoting dissociation of the Integrase-LEDGF/p75 complex. Asymmetrically arginine dimethylated at one site by host PRMT6. Methylation impairs the RNA-binding activity and export of viral RNA from the nucleus to the cytoplasm. In terms of processing, phosphorylated by protein kinase CK2. Presence of, and maybe binding to the N-terminus of the regulatory beta subunit of CK2 is necessary for CK2-mediated Rev's phosphorylation.

It is found in the host nucleus. Its subcellular location is the host nucleolus. It localises to the host cytoplasm. Functionally, escorts unspliced or incompletely spliced viral pre-mRNAs (late transcripts) out of the nucleus of infected cells. These pre-mRNAs carry a recognition sequence called Rev responsive element (RRE) located in the env gene, that is not present in fully spliced viral mRNAs (early transcripts). This function is essential since most viral proteins are translated from unspliced or partially spliced pre-mRNAs which cannot exit the nucleus by the pathway used by fully processed cellular mRNAs. Rev itself is translated from a fully spliced mRNA that readily exits the nucleus. Rev's nuclear localization signal (NLS) binds directly to KPNB1/Importin beta-1 without previous binding to KPNA1/Importin alpha-1. KPNB1 binds to the GDP bound form of RAN (Ran-GDP) and targets Rev to the nucleus. In the nucleus, the conversion from Ran-GDP to Ran-GTP dissociates Rev from KPNB1 and allows Rev's binding to the RRE in viral pre-mRNAs. Rev multimerization on the RRE via cooperative assembly exposes its nuclear export signal (NES) to the surface. Rev can then form a complex with XPO1/CRM1 and Ran-GTP, leading to nuclear export of the complex. Conversion from Ran-GTP to Ran-GDP mediates dissociation of the Rev/RRE/XPO1/RAN complex, so that Rev can return to the nucleus for a subsequent round of export. Beside KPNB1, also seems to interact with TNPO1/Transportin-1, RANBP5/IPO5 and IPO7/RANBP7 for nuclear import. The nucleoporin-like HRB/RIP is an essential cofactor that probably indirectly interacts with Rev to release HIV RNAs from the perinuclear region to the cytoplasm. The protein is Protein Rev of Homo sapiens (Human).